The chain runs to 369 residues: Chorismate synthase (369 aa).

The NADP(+) site is built by arginine 48 and arginine 54. Residues 125–127 (RSS), 238–239 (NA), glycine 278, 293–297 (KPTSS), and arginine 319 each bind FMN.

This sequence belongs to the chorismate synthase family. Homotetramer. FMNH2 is required as a cofactor.

It carries out the reaction 5-O-(1-carboxyvinyl)-3-phosphoshikimate = chorismate + phosphate. Its pathway is metabolic intermediate biosynthesis; chorismate biosynthesis; chorismate from D-erythrose 4-phosphate and phosphoenolpyruvate: step 7/7. Functionally, catalyzes the anti-1,4-elimination of the C-3 phosphate and the C-6 proR hydrogen from 5-enolpyruvylshikimate-3-phosphate (EPSP) to yield chorismate, which is the branch point compound that serves as the starting substrate for the three terminal pathways of aromatic amino acid biosynthesis. This reaction introduces a second double bond into the aromatic ring system. The sequence is that of Chorismate synthase from Cupriavidus metallidurans (strain ATCC 43123 / DSM 2839 / NBRC 102507 / CH34) (Ralstonia metallidurans).